Here is a 400-residue protein sequence, read N- to C-terminus: Large envelope protein (400 aa).

Position 1 is an N-acetylmethionine (methionine 1). Glycine 2 carries the N-myristoyl glycine; by host lipid modification. The pre-S1 stretch occupies residues 2–119 (GGWSSKHRKG…PPLRDTHPQA (118 aa)). Positions 2 to 174 (GGWSSKHRKG…FTKTGDPASN (173 aa)) are pre-S. At 2-181 (GGWSSKHRKG…ASNMESTTSG (180 aa)) the chain is on the virion surface; in external conformation side. The Intravirion; in internal conformation portion of the chain corresponds to 2-253 (GGWSSKHRKG…PGYRWMCLRR (252 aa)). Tryptophan 4 carries N-linked (GlcNAc...) asparagine glycosylation. Residues 89–117 (PAAPPPASTNRQSGRQPTPISPPLRDTHP) form a disordered region. Polar residues predominate over residues 96–106 (STNRQSGRQPT). The segment at 120 to 174 (MQWNSTAFHQALQDPRVRGLYFPAGGSSSGTVNPVPNTVSHISSIFTKTGDPASN) is pre-S2. The chain crosses the membrane as a helical span at residues 182–202 (FLGPLLVLQAGFFLLTRILTI). At 203–253 (PQSLDSWWTSLNFLGGAPGCIGQNSQSQTSNHSPTSCPPTCPGYRWMCLRR) the chain is on the intravirion; in external conformation side. A helical membrane pass occupies residues 254–274 (FIIFLFILLLCLIFLLVLLDY). Topologically, residues 275–348 (QGMLPVCPLL…WASVRFSWLS (74 aa)) are virion surface. N-linked (GlcNAc...) asparagine; by host glycosylation is present at asparagine 320. Residues 349–369 (LLVPFVQWFAGLSPTVWLSVI) traverse the membrane as a helical segment. Residues 370–375 (WMIWYW) are Intravirion-facing. Residues 376 to 398 (GPSLYNILSPFLPLLPIFLCLWV) traverse the membrane as a helical segment. Residues 399 to 400 (YI) lie on the Virion surface side of the membrane.

Belongs to the orthohepadnavirus major surface antigen family. In its internal form (Li-HBsAg), interacts with the capsid protein and with the isoform S. Interacts with host chaperone CANX. As to quaternary structure, associates with host chaperone CANX through its pre-S2 N glycan; this association may be essential for isoform M proper secretion. In terms of assembly, interacts with isoform L. Interacts with the antigens of satellite virus HDV (HDVAgs); this interaction is required for encapsidation of HDV genomic RNA. Post-translationally, isoform M is N-terminally acetylated by host at a ratio of 90%, and N-glycosylated by host at the pre-S2 region. In terms of processing, myristoylated.

It localises to the virion membrane. Functionally, the large envelope protein exists in two topological conformations, one which is termed 'external' or Le-HBsAg and the other 'internal' or Li-HBsAg. In its external conformation the protein attaches the virus to cell receptors and thereby initiating infection. This interaction determines the species specificity and liver tropism. This attachment induces virion internalization predominantly through caveolin-mediated endocytosis. The large envelope protein also assures fusion between virion membrane and endosomal membrane. In its internal conformation the protein plays a role in virion morphogenesis and mediates the contact with the nucleocapsid like a matrix protein. In terms of biological role, the middle envelope protein plays an important role in the budding of the virion. It is involved in the induction of budding in a nucleocapsid independent way. In this process the majority of envelope proteins bud to form subviral lipoprotein particles of 22 nm of diameter that do not contain a nucleocapsid. The chain is Large envelope protein from Homo sapiens (Human).